Here is a 473-residue protein sequence, read N- to C-terminus: Flavonol 3-O-glucosyltransferase UGT89B1 (473 aa).

H25 acts as the Proton acceptor in catalysis. H25 serves as a coordination point for an anthocyanidin. Catalysis depends on D127, which acts as the Charge relay. A348, Q350, H365, W368, N369, S370, and E373 together coordinate UDP-alpha-D-glucose. Residue A388 participates in an anthocyanidin binding. D389 and Q390 together coordinate UDP-alpha-D-glucose.

This sequence belongs to the UDP-glycosyltransferase family.

It carries out the reaction a flavonol + UDP-alpha-D-glucose = a flavonol 3-O-beta-D-glucoside + UDP + H(+). It catalyses the reaction a 7-O-hydroxy-flavonol + UDP-alpha-D-glucose = a flavonol 7-O-beta-D-glucoside + UDP + H(+). In terms of biological role, possesses quercetin 3-O-glucosyltransferase, 7-O-glucosyltransferase and 4'-O-glucosyltransferase activities in vitro. Also active in vitro on benzoates and benzoate derivatives. The sequence is that of Flavonol 3-O-glucosyltransferase UGT89B1 from Arabidopsis thaliana (Mouse-ear cress).